A 198-amino-acid polypeptide reads, in one-letter code: Glycerol-3-phosphate acyltransferase (198 aa).

Helical transmembrane passes span 2–22, 48–70, 75–97, 111–131, and 154–174; these read YAVL…AYIL, LGYK…AVLI, MGNT…PVFL, VVMT…VTVI, and IFWN…LAIF.

It belongs to the PlsY family. As to quaternary structure, probably interacts with PlsX.

It localises to the cell membrane. The catalysed reaction is an acyl phosphate + sn-glycerol 3-phosphate = a 1-acyl-sn-glycero-3-phosphate + phosphate. The protein operates within lipid metabolism; phospholipid metabolism. Functionally, catalyzes the transfer of an acyl group from acyl-phosphate (acyl-PO(4)) to glycerol-3-phosphate (G3P) to form lysophosphatidic acid (LPA). This enzyme utilizes acyl-phosphate as fatty acyl donor, but not acyl-CoA or acyl-ACP. The protein is Glycerol-3-phosphate acyltransferase of Thermoanaerobacter pseudethanolicus (strain ATCC 33223 / 39E) (Clostridium thermohydrosulfuricum).